The primary structure comprises 313 residues: Porphobilinogen deaminase (313 aa).

S-(dipyrrolylmethanemethyl)cysteine is present on Cys242.

This sequence belongs to the HMBS family. Monomer. Dipyrromethane serves as cofactor.

It carries out the reaction 4 porphobilinogen + H2O = hydroxymethylbilane + 4 NH4(+). Its pathway is porphyrin-containing compound metabolism; protoporphyrin-IX biosynthesis; coproporphyrinogen-III from 5-aminolevulinate: step 2/4. Its function is as follows. Tetrapolymerization of the monopyrrole PBG into the hydroxymethylbilane pre-uroporphyrinogen in several discrete steps. This is Porphobilinogen deaminase from Pseudomonas syringae pv. syringae (strain B728a).